Reading from the N-terminus, the 748-residue chain is Catalase-peroxidase 2 (748 aa).

The segment covering 1-24 (MSSDTSDSRPPNPDTKTASTSESE) has biased composition (polar residues). Positions 1–43 (MSSDTSDSRPPNPDTKTASTSESENPAIPSPKPKSGAPLRNQD) are disordered. Residues 113–238 (WHSAGTYRIH…YGATTMGLIY (126 aa)) constitute a cross-link (tryptophyl-tyrosyl-methioninium (Trp-Tyr) (with M-264)). Histidine 114 (proton acceptor) is an active-site residue. Residues 238-264 (YVNPEGPEGQPDPLAAAHDIRETFGRM) constitute a cross-link (tryptophyl-tyrosyl-methioninium (Tyr-Met) (with W-113)). Histidine 279 is a binding site for heme b.

This sequence belongs to the peroxidase family. Peroxidase/catalase subfamily. In terms of assembly, homotetramer. Requires heme b as cofactor. In terms of processing, formation of the three residue Trp-Tyr-Met cross-link is important for the catalase, but not the peroxidase activity of the enzyme.

It carries out the reaction H2O2 + AH2 = A + 2 H2O. The enzyme catalyses 2 H2O2 = O2 + 2 H2O. Functionally, bifunctional enzyme with both catalase and broad-spectrum peroxidase activity. May play a role in the intracellular survival of mycobacteria. This is Catalase-peroxidase 2 from Mycolicibacterium smegmatis (strain ATCC 700084 / mc(2)155) (Mycobacterium smegmatis).